The sequence spans 250 residues: Isoprenyl transferase (250 aa).

D27 is a catalytic residue. D27 serves as a coordination point for Mg(2+). Substrate is bound by residues 28–31, W32, H48, and 76–78; these read GNRR and STE. N79 acts as the Proton acceptor in catalysis. Substrate is bound by residues F80, R82, R199, and 205–207; that span reads RVS. A Mg(2+)-binding site is contributed by E218.

It belongs to the UPP synthase family. Homodimer. Mg(2+) serves as cofactor.

Catalyzes the condensation of isopentenyl diphosphate (IPP) with allylic pyrophosphates generating different type of terpenoids. The sequence is that of Isoprenyl transferase from Chlamydia caviae (strain ATCC VR-813 / DSM 19441 / 03DC25 / GPIC) (Chlamydophila caviae).